Consider the following 473-residue polypeptide: Hyaluronidase-2 (473 aa).

The signal sequence occupies residues 1–20 (MWTGLGPAVTLALVLVVAWA). Cystine bridges form between C47–C343 and C214–C230. 2 N-linked (GlcNAc...) asparagine glycosylation sites follow: N77 and N106. E138 functions as the Proton donor in the catalytic mechanism. 2 N-linked (GlcNAc...) asparagine glycosylation sites follow: N340 and N360. Positions 364–442 (AAQYCSWAQC…YLGWGGEQCQ (79 aa)) constitute an EGF-like domain. Disulfide bonds link C368–C379, C373–C430, and C432–C441. G451 is lipidated: GPI-anchor amidated glycine. A propeptide spans 452–473 (ASGAWAGSHLTGLLAVAVLAFT) (removed in mature form).

The protein belongs to the glycosyl hydrolase 56 family. In terms of assembly, interacts with MST1R.

The protein resides in the cell membrane. The catalysed reaction is Random hydrolysis of (1-&gt;4)-linkages between N-acetyl-beta-D-glucosamine and D-glucuronate residues in hyaluronate.. In terms of biological role, catalyzes hyaluronan degradation into small fragments that are endocytosed and degraded in lysosomes by HYAL1 and exoglycosidases. Essential for the breakdown of extracellular matrix hyaluronan. This is Hyaluronidase-2 (HYAL2) from Bos taurus (Bovine).